The sequence spans 247 residues: 2,3-bisphosphoglycerate-dependent phosphoglycerate mutase (247 aa).

Substrate-binding positions include 8-15 (RHGESQWN), 21-22 (TG), Arg60, 87-90 (ERHY), Lys98, 114-115 (RR), and 183-184 (GN). His9 acts as the Tele-phosphohistidine intermediate in catalysis. Residue Glu87 is the Proton donor/acceptor of the active site.

This sequence belongs to the phosphoglycerate mutase family. BPG-dependent PGAM subfamily.

It catalyses the reaction (2R)-2-phosphoglycerate = (2R)-3-phosphoglycerate. The protein operates within carbohydrate degradation; glycolysis; pyruvate from D-glyceraldehyde 3-phosphate: step 3/5. In terms of biological role, catalyzes the interconversion of 2-phosphoglycerate and 3-phosphoglycerate. In Chlorobium chlorochromatii (strain CaD3), this protein is 2,3-bisphosphoglycerate-dependent phosphoglycerate mutase.